Here is a 78-residue protein sequence, read N- to C-terminus: Large ribosomal subunit protein eL20 (78 aa).

The protein belongs to the eukaryotic ribosomal protein eL20 family. As to quaternary structure, part of the 50S ribosomal subunit. Binds 23S rRNA.

This Pyrobaculum neutrophilum (strain DSM 2338 / JCM 9278 / NBRC 100436 / V24Sta) (Thermoproteus neutrophilus) protein is Large ribosomal subunit protein eL20.